An 853-amino-acid polypeptide reads, in one-letter code: MAPRKKAVTKKKTVEKSPPIEEEIIEEPVDEIVESDGDDKKNKKKGKRKSSKKSKKEKEENVEEEEQDQEEEEEGNKKQKEENDADKKSRKHDEHRKKRDSKNRRSHSKSDENEEGEEDDEERRKKRRRRKHREKRKKNGNKEEEEEEEQDDEHEDQNVEEDEEDVNVEKQKQQQQQSDFDEEEKEEEKEEEEEEEQIEIKKRSKKRNSIDSGRKDKSKKRKSKKKKRGQNDDDDDDDDNDDDDDDQDEEKEYEQDEDVNQESIVSEKEEEEDEEKQSQGSEDEEKQSENERRNDQDYTDRERERNRSRDRDSRDYSSRSDHRDYRDRDRDRSRDRDRDYRDSRDYRDRDRDYRDRDRDHYSSGGSSSSSRDHRDHRDRDYRDRDRDHRDRSRDRDRDHYSSSSGSSSNRRSRDRDNDSKRDEKSSSSNNSNNSTSTTSNNNASSNNVKIVQPPKENFFSNYRAIQSSIIPTHNKSKFGERILSIAPTEPPPNFQIPLSKPYRDDSLQQNNDNNNNSSNNNSNNSNNNFNNDNNPYNNSNNYNMNNSNTSPYNNSNNSNSNSSYYNDNDYNNNNNNNNNSNNNNNNNNNNNNNNNNNNNNNNNNFNNSNSNSSESKPNYFNNLSNVFNQITKPLENYKNNGKNENNNNNNNKNKNEDEKRIDLVQTKLSLKSSKSTPQTYNEKEFKVQISNIVVKKLKKYYKTKITTKEDFQYLGKKFTDFVITKERGNQTINKDSEKKIEKVIDNYFEKKEVYDRKKDKDYKKDDGDKLINSSIDISNDSNLSESSITITSTSTSTSTSALTSPKTTGTTTSTITTVTSTSTSSIENTKILVDDEKFKTNIQNETSKESNSI.

Residues M1 to K11 are compositionally biased toward basic residues. Disordered stretches follow at residues M1–V448, I485–N621, and E635–E658. The segment covering I20–G37 has biased composition (acidic residues). Residues N42–K55 show a composition bias toward basic residues. Over residues E60 to E74 the composition is skewed to acidic residues. The segment covering G75 to K87 has biased composition (basic and acidic residues). Positions K88–H107 are enriched in basic residues. Residues E112–E121 show a composition bias toward acidic residues. Residues R124–N139 show a composition bias toward basic residues. Acidic residues-rich tracts occupy residues E143 to V166 and D179 to Q197. Positions D216 to R228 are enriched in basic residues. Composition is skewed to acidic residues over residues D232–N260 and K268–K286. 3 stretches are compositionally biased toward basic and acidic residues: residues Q287 to Y361, S370 to Y400, and R411 to S425. Composition is skewed to low complexity over residues S426–N447, N510–S613, and N636–K652.

This is an uncharacterized protein from Dictyostelium discoideum (Social amoeba).